The primary structure comprises 478 residues: MNLTHIWKTTLSALQSQTSRHDYEALLRPAMLLSLDNGIARIGVSSPIQKEGLENRLLMPLRNALTRVVGYPVQVQVLIANQALRPEVTAAPRNGTHVALEPEPFVTEPPTPAFTSGNGNGERAVQLDLASAMRSGMLNPRYTFASFIVGSSNRLAHAACLAVADNPGQAYNPLFLYGGVGLGKTHLLHAIGNRVLDRDPEINVLYVSSEKFTNDLINAIRRQQTEEFRMRYRNIDVLLIDDIQFIAGKDATQEEFFHTFNTLHSAAKHIVISSDRPPKAILTLEERLRSRFEWGLIVDVQPPDLETRTAILRAKAEQMSVHVPDEVIDFLAHKIQSNIRELEGSLNRVAAYAELNRLPITIDTATAALADLLGNQRRRRISAEAILQIVSEHYGIEVEQLRARNRSRHVVVPRQVAMYLLREETESSLVDIGNLLGGRDHTTVMYGCEKIAEEINTDSHLRSEVMAIRERIQMMRGL.

A domain I, interacts with DnaA modulators region spans residues 1–71; it reads MNLTHIWKTT…RNALTRVVGY (71 aa). Positions 71–136 are domain II; it reads YPVQVQVLIA…LDLASAMRSG (66 aa). The interval 137 to 353 is domain III, AAA+ region; it reads MLNPRYTFAS…GSLNRVAAYA (217 aa). Residues Gly181, Gly183, Lys184, and Thr185 each contribute to the ATP site. The domain IV, binds dsDNA stretch occupies residues 354–478; it reads ELNRLPITID…RERIQMMRGL (125 aa).

Belongs to the DnaA family. Oligomerizes as a right-handed, spiral filament on DNA at oriC.

The protein resides in the cytoplasm. Functionally, plays an essential role in the initiation and regulation of chromosomal replication. ATP-DnaA binds to the origin of replication (oriC) to initiate formation of the DNA replication initiation complex once per cell cycle. Binds the DnaA box (a 9 base pair repeat at the origin) and separates the double-stranded (ds)DNA. Forms a right-handed helical filament on oriC DNA; dsDNA binds to the exterior of the filament while single-stranded (ss)DNA is stabiized in the filament's interior. The ATP-DnaA-oriC complex binds and stabilizes one strand of the AT-rich DNA unwinding element (DUE), permitting loading of DNA polymerase. After initiation quickly degrades to an ADP-DnaA complex that is not apt for DNA replication. Binds acidic phospholipids. This Chloroflexus aggregans (strain MD-66 / DSM 9485) protein is Chromosomal replication initiator protein DnaA.